The primary structure comprises 432 residues: Tubulin-specific chaperone cofactor E-like protein (432 aa).

LRR repeat units lie at residues 69–94 (ASHV…ILKN), 95–117 (LPHL…HELP), 118–140 (VSTL…QSFL), 143–167 (LPKV…EPIS), 168–191 (TTVR…NVVK), 193–217 (FPNV…HFEQ), and 218–242 (LPFW…QLNR). The interval 254–295 (IPLLDALTNEERLHLIIGRLHHLRVLNGSKISSEQREQSERF) is LRRCT. Residues 324–415 (VTIDLTPKKE…GDSFLVQEKI (92 aa)) are ubiquitin-like (UBL).

The protein localises to the cytoplasm. Its subcellular location is the cytoskeleton. In terms of biological role, acts as a regulator of tubulin stability. Involved in microtubule-dependent neuronal function. May be involved in tubulin acetylation/deacetylation pathway. The protein is Tubulin-specific chaperone cofactor E-like protein of Caenorhabditis elegans.